A 460-amino-acid chain; its full sequence is Tyrosine-protein phosphatase non-receptor type 18 (460 aa).

A Tyrosine-protein phosphatase domain is found at 26-291 (LAGEFSDIQA…RFLYHTVAQM (266 aa)). Residues D197, 229 to 235 (CSAGCGR), and Q276 contribute to the substrate site. The active-site Phosphocysteine intermediate is C229. Positions 361 to 460 (GAPAGAGSGT…RDPPAEWTRV (100 aa)) are disordered. Over residues 364 to 378 (AGAGSGTQTGTGTGT) the composition is skewed to gly residues. Residue Y389 is modified to Phosphotyrosine. A Phosphothreonine modification is found at T393. Residue Y426 is modified to Phosphotyrosine. Basic and acidic residues predominate over residues 449–460 (GPRDPPAEWTRV).

Belongs to the protein-tyrosine phosphatase family. Non-receptor class 4 subfamily. Interacts with PSTPIP1. As to expression, expressed in brain, colon and several tumor-derived cell lines.

It localises to the nucleus. It is found in the cytoplasm. It carries out the reaction O-phospho-L-tyrosyl-[protein] + H2O = L-tyrosyl-[protein] + phosphate. Differentially dephosphorylate autophosphorylated tyrosine kinases which are known to be overexpressed in tumor tissues. The polypeptide is Tyrosine-protein phosphatase non-receptor type 18 (PTPN18) (Homo sapiens (Human)).